Consider the following 213-residue polypeptide: MKIIGIDEAGKGPVIGPMCIGGVRIDEDKSNALKNLGVADSKKLSPKRRVHLAAQIKKYADGWFVYEVSPNQIDELRKLMSMNDIMVLAFGSVIEELPSDKIYADAADVKEERFGKRLFDNYMEKHPDVSPPEVISKHGADDLFPVVSAASILAKVRRDELIEKIKVDMGVDIGSGYPSDPKTKKFLENWYRENSSFPDIVRHSWKTAQKFIQ.

Residues 1–213 (MKIIGIDEAG…SWKTAQKFIQ (213 aa)) form the RNase H type-2 domain. A divalent metal cation is bound by residues D7, E8, and D105.

Belongs to the RNase HII family. Mn(2+) serves as cofactor. Mg(2+) is required as a cofactor.

The protein resides in the cytoplasm. It carries out the reaction Endonucleolytic cleavage to 5'-phosphomonoester.. In terms of biological role, endonuclease that specifically degrades the RNA of RNA-DNA hybrids. This Methanococcoides burtonii (strain DSM 6242 / NBRC 107633 / OCM 468 / ACE-M) protein is Ribonuclease HII.